We begin with the raw amino-acid sequence, 225 residues long: Shikimate kinase (225 aa).

27 to 32 serves as a coordination point for ATP; it reads GAGKTT. T31 contacts Mg(2+). Substrate-binding residues include D49, R73, and G95. R132 is an ATP binding site. R150 contacts substrate. The disordered stretch occupies residues 186 to 225; sequence GGSEPDEAADAAGGSEPDEAADAAGGSEPDEAADAAGGKR.

The protein belongs to the shikimate kinase family. Monomer. The cofactor is Mg(2+).

It is found in the cytoplasm. It catalyses the reaction shikimate + ATP = 3-phosphoshikimate + ADP + H(+). The protein operates within metabolic intermediate biosynthesis; chorismate biosynthesis; chorismate from D-erythrose 4-phosphate and phosphoenolpyruvate: step 5/7. Its function is as follows. Catalyzes the specific phosphorylation of the 3-hydroxyl group of shikimic acid using ATP as a cosubstrate. This is Shikimate kinase from Frankia casuarinae (strain DSM 45818 / CECT 9043 / HFP020203 / CcI3).